Consider the following 354-residue polypeptide: MRTQWVELGERSYPIYIGDGVLDQGVLAEHLVADRALLVSNETVAPLYAERLAVPGAEVQSVTLHDGERYKTLQTCEQVYDALIEGRFDRSATVIALGGGVVGDMAGFCAATYQRGVGYIQVPTTLLAQVDSSVGGKTGVNHPRGKNMIGAFHQPRAVVADTGVLATLPEREYNAGLAEVVKYGLIRDPAFFDWLEAHVDALRRRDPEALAHAVAESCRNKAEVVAADEREAGERALLNLGHTFGHAIETYTDYCTWLHGEAVAAGMVMAARMSVRLGWLQRNGLERTIALLEAFGLPTRPPAIPEARFRELMSVDKKNRGGQLRLVLLRSVGDAVVTGEFAPEALTDTLVEAV.

Residues 66 to 71 (DGERYK), 100 to 104 (GVVGD), 124 to 125 (TT), lysine 137, and lysine 146 each bind NAD(+). Residues glutamate 179, histidine 242, and histidine 259 each coordinate Zn(2+).

It belongs to the sugar phosphate cyclases superfamily. Dehydroquinate synthase family. Requires Co(2+) as cofactor. The cofactor is Zn(2+). NAD(+) serves as cofactor.

Its subcellular location is the cytoplasm. The enzyme catalyses 7-phospho-2-dehydro-3-deoxy-D-arabino-heptonate = 3-dehydroquinate + phosphate. Its pathway is metabolic intermediate biosynthesis; chorismate biosynthesis; chorismate from D-erythrose 4-phosphate and phosphoenolpyruvate: step 2/7. In terms of biological role, catalyzes the conversion of 3-deoxy-D-arabino-heptulosonate 7-phosphate (DAHP) to dehydroquinate (DHQ). This chain is 3-dehydroquinate synthase, found in Halorhodospira halophila (strain DSM 244 / SL1) (Ectothiorhodospira halophila (strain DSM 244 / SL1)).